Consider the following 207-residue polypeptide: Thymidylate kinase (207 aa).

9 to 16 (GGEGCGKS) is an ATP binding site.

This sequence belongs to the thymidylate kinase family.

The enzyme catalyses dTMP + ATP = dTDP + ADP. Its function is as follows. Phosphorylation of dTMP to form dTDP in both de novo and salvage pathways of dTTP synthesis. This Dehalococcoides mccartyi (strain ATCC BAA-2266 / KCTC 15142 / 195) (Dehalococcoides ethenogenes (strain 195)) protein is Thymidylate kinase.